Consider the following 308-residue polypeptide: tRNA dimethylallyltransferase (308 aa).

An ATP-binding site is contributed by 10-17; sequence GPTASGKT. 12–17 contributes to the substrate binding site; it reads TASGKT. Interaction with substrate tRNA stretches follow at residues 35–38 and 159–163; these read DSSL and QRIFR.

The protein belongs to the IPP transferase family. Monomer. Mg(2+) serves as cofactor.

The catalysed reaction is adenosine(37) in tRNA + dimethylallyl diphosphate = N(6)-dimethylallyladenosine(37) in tRNA + diphosphate. In terms of biological role, catalyzes the transfer of a dimethylallyl group onto the adenine at position 37 in tRNAs that read codons beginning with uridine, leading to the formation of N6-(dimethylallyl)adenosine (i(6)A). The chain is tRNA dimethylallyltransferase from Francisella tularensis subsp. novicida (strain U112).